A 121-amino-acid polypeptide reads, in one-letter code: Small ribosomal subunit protein uS13 (121 aa).

Residues 92-121 (RKGLPMRGQRTRTNARTRKGPRRAAQALKK) are disordered.

The protein belongs to the universal ribosomal protein uS13 family. As to quaternary structure, part of the 30S ribosomal subunit. Forms a loose heterodimer with protein S19. Forms two bridges to the 50S subunit in the 70S ribosome.

In terms of biological role, located at the top of the head of the 30S subunit, it contacts several helices of the 16S rRNA. In the 70S ribosome it contacts the 23S rRNA (bridge B1a) and protein L5 of the 50S subunit (bridge B1b), connecting the 2 subunits; these bridges are implicated in subunit movement. Contacts the tRNAs in the A and P-sites. The polypeptide is Small ribosomal subunit protein uS13 (Burkholderia cenocepacia (strain HI2424)).